The primary structure comprises 117 residues: NADH-ubiquinone oxidoreductase chain 3 (117 aa).

3 helical membrane-spanning segments follow: residues 4-24 (IIIIASVILLITTVVMFLASI), 60-80 (ITIIFLIFDVEIALILPMIII), and 86-106 (IMIWTITSIIFILILLIGLYH).

The protein belongs to the complex I subunit 3 family.

The protein localises to the mitochondrion membrane. It catalyses the reaction a ubiquinone + NADH + 5 H(+)(in) = a ubiquinol + NAD(+) + 4 H(+)(out). In terms of biological role, core subunit of the mitochondrial membrane respiratory chain NADH dehydrogenase (Complex I) that is believed to belong to the minimal assembly required for catalysis. Complex I functions in the transfer of electrons from NADH to the respiratory chain. The immediate electron acceptor for the enzyme is believed to be ubiquinone. The chain is NADH-ubiquinone oxidoreductase chain 3 (mt:ND3) from Drosophila yakuba (Fruit fly).